A 344-amino-acid polypeptide reads, in one-letter code: Glutamine synthetase (344 aa).

In terms of domain architecture, GS beta-grasp spans 4-86 (YKLEYIWLDG…VMCEVMMPDG (83 aa)). Residues 89 to 344 (PHASNKRATI…SVPTEKKAVA (256 aa)) form the GS catalytic domain. Mg(2+) is bound by residues Glu109 and Glu111. An ATP-binding site is contributed by Glu167. Positions 172 and 179 each coordinate Mg(2+). Glu278 is an L-glutamate binding site.

Belongs to the glutamine synthetase family. In terms of assembly, homooctamer and homotetramer. Requires Mg(2+) as cofactor.

Its subcellular location is the cytoplasm. It carries out the reaction L-glutamate + NH4(+) + ATP = L-glutamine + ADP + phosphate + H(+). Its function is as follows. Catalyzes the ATP-dependent biosynthesis of glutamine from glutamate and ammonia. The chain is Glutamine synthetase from Bradyrhizobium diazoefficiens (strain JCM 10833 / BCRC 13528 / IAM 13628 / NBRC 14792 / USDA 110).